The sequence spans 272 residues: MQQDPPTSQPHTPQIVDGVKPRGWVDHPAGLHFEYLGIADSRPTRTEYNECWAHQREVHAEVSAHQRPNTVIYVEHDPVYTAGRRTRKEAYPFDGTPVVPVDRGGEITWHGPGQLVGYPIVFLQRGIGVVDYVRRVEEAVIRLVSQYGLRAGRVPGRTGVWFPSDGMGPERKVCAIGIRVSRQTAMHGFALNIDPDTAGFDNIIPCGISDADVTSMARELRRLHGPDAEVPSLLEVAGNLEPILTEMMSFQPYEMSPDIPRREHPAFLHPMP.

Residues 1 to 12 show a composition bias toward polar residues; it reads MQQDPPTSQPHT. A disordered region spans residues 1 to 20; it reads MQQDPPTSQPHTPQIVDGVK. One can recognise a BPL/LPL catalytic domain in the interval 65–255; it reads HQRPNTVIYV…EMMSFQPYEM (191 aa). Residues 103-110, 175-177, and 188-190 contribute to the substrate site; these read RGGEITWH, AIG, and GFA. Cysteine 206 serves as the catalytic Acyl-thioester intermediate.

Belongs to the LipB family.

Its subcellular location is the cytoplasm. The enzyme catalyses octanoyl-[ACP] + L-lysyl-[protein] = N(6)-octanoyl-L-lysyl-[protein] + holo-[ACP] + H(+). Its pathway is protein modification; protein lipoylation via endogenous pathway; protein N(6)-(lipoyl)lysine from octanoyl-[acyl-carrier-protein]: step 1/2. Functionally, catalyzes the transfer of endogenously produced octanoic acid from octanoyl-acyl-carrier-protein onto the lipoyl domains of lipoate-dependent enzymes. Lipoyl-ACP can also act as a substrate although octanoyl-ACP is likely to be the physiological substrate. This Cutibacterium acnes (strain DSM 16379 / KPA171202) (Propionibacterium acnes) protein is Octanoyltransferase.